Consider the following 260-residue polypeptide: Probable 6-oxopurine nucleoside phosphorylase (260 aa).

Phosphate is bound by residues serine 9 and 49-50; that span reads RH. Methionine 182 contributes to the substrate binding site. Phosphate is bound at residue threonine 183. 206–208 lines the substrate pocket; the sequence is NMA.

The protein belongs to the PNP/MTAP phosphorylase family. MTAP subfamily. As to quaternary structure, homohexamer. Dimer of a homotrimer.

The enzyme catalyses a purine D-ribonucleoside + phosphate = a purine nucleobase + alpha-D-ribose 1-phosphate. It participates in purine metabolism; purine nucleoside salvage. Its function is as follows. Purine nucleoside phosphorylase which is highly specific for 6-oxopurine nucleosides. Cleaves guanosine or inosine to respective bases and sugar-1-phosphate molecules. Involved in purine salvage. This Moorella thermoacetica (strain ATCC 39073 / JCM 9320) protein is Probable 6-oxopurine nucleoside phosphorylase.